Here is a 428-residue protein sequence, read N- to C-terminus: Protein clpf-1 (428 aa).

E16 and R56 together coordinate ATP. Residues 99–118 (KKREEQAVSNSSKPKGPRLL) form a disordered region. ATP is bound at residue 124–129 (DVGKTT).

This sequence belongs to the Clp1 family. Clp1 subfamily.

It localises to the nucleus. Required for endonucleolytic cleavage during polyadenylation-dependent pre-mRNA 3'-end formation. The sequence is that of Protein clpf-1 from Caenorhabditis briggsae.